A 145-amino-acid polypeptide reads, in one-letter code: Small ribosomal subunit protein uS12 (145 aa).

Belongs to the universal ribosomal protein uS12 family. As to quaternary structure, component of the small ribosomal subunit. Mature ribosomes consist of a small (40S) and a large (60S) subunit. The 40S subunit contains about 32 different proteins and 1 molecule of RNA (18S). The 60S subunit contains 45 different proteins and 3 molecules of RNA (25S, 5.8S and 5S).

The protein resides in the cytoplasm. In terms of biological role, component of the ribosome, a large ribonucleoprotein complex responsible for the synthesis of proteins in the cell. The small ribosomal subunit (SSU) binds messenger RNAs (mRNAs) and translates the encoded message by selecting cognate aminoacyl-transfer RNA (tRNA) molecules. The large subunit (LSU) contains the ribosomal catalytic site termed the peptidyl transferase center (PTC), which catalyzes the formation of peptide bonds, thereby polymerizing the amino acids delivered by tRNAs into a polypeptide chain. The nascent polypeptides leave the ribosome through a tunnel in the LSU and interact with protein factors that function in enzymatic processing, targeting, and the membrane insertion of nascent chains at the exit of the ribosomal tunnel. The sequence is that of Small ribosomal subunit protein uS12 (RPS23A) from Candida albicans (strain SC5314 / ATCC MYA-2876) (Yeast).